Consider the following 1098-residue polypeptide: Bifunctional helicase and thymine dioxygenase JBP2 (1098 aa).

The thymine dioxygenase stretch occupies residues 1-540 (MLNGLTRVST…PPLFVPTRLA (540 aa)). Positions 415, 417, and 465 each coordinate Fe cation. R479 lines the 2-oxoglutarate pocket. A DNA Helicase region spans residues 541 to 1098 (SHLAPVQLAA…RYQESVRESE (558 aa)). The region spanning 555–730 (VERTEKQSGC…YRLVGWVNKG (176 aa)) is the Helicase ATP-binding domain. 568 to 575 (MTMGLGKT) provides a ligand contact to ATP. A DEAH box motif is present at residues 681–684 (DEGH). Residues 897–1057 (VLVDIVLRVQ…ALPDELEDCA (161 aa)) enclose the Helicase C-terminal domain.

This sequence in the C-terminal section; belongs to the SNF2/RAD54 helicase family. The protein in the N-terminal section; belongs to the TET family. JBP2 subfamily. Fe(2+) is required as a cofactor.

The protein resides in the nucleus. It catalyses the reaction ATP + H2O = ADP + phosphate + H(+). The enzyme catalyses thymine + 2-oxoglutarate + O2 = 5-hydroxymethyluracil + succinate + CO2. Dioxygenase that catalyzes the first step of DNA base J (beta-d-glucosyl-HOMedU) biosynthesis by converting thymine to 5-hydroxymethyluracil (HOMedU). DNA base J is a hypermodified thymidine residue found in the genome of kinetoplastid parasites, which is localized primarily to repetitive DNA, namely the telomeres, and is implicated in the regulation of antigenic variation. Probably also acts as a DNA helicase. Recognizes and binds specific regions of the genome, hydrolyzes ATP and allows the DNA base J de novo synthesis. Involved in initial synthesis of DNA base J, JBP1 being able to act via the basal level of DNA base J and propagate further synthesis. In contrast to JBP1, it does not specifically bind DNA base J, however it binds chromatin. The protein is Bifunctional helicase and thymine dioxygenase JBP2 (JBP2) of Leishmania infantum.